Consider the following 377-residue polypeptide: ATP phosphoribosyltransferase regulatory subunit (377 aa).

It belongs to the class-II aminoacyl-tRNA synthetase family. HisZ subfamily. As to quaternary structure, heteromultimer composed of HisG and HisZ subunits.

It is found in the cytoplasm. Its pathway is amino-acid biosynthesis; L-histidine biosynthesis; L-histidine from 5-phospho-alpha-D-ribose 1-diphosphate: step 1/9. In terms of biological role, required for the first step of histidine biosynthesis. May allow the feedback regulation of ATP phosphoribosyltransferase activity by histidine. The polypeptide is ATP phosphoribosyltransferase regulatory subunit (Sinorhizobium medicae (strain WSM419) (Ensifer medicae)).